A 167-amino-acid chain; its full sequence is Transmembrane protein 229B (167 aa).

Residues 1 to 14 lie on the Cytoplasmic side of the membrane; sequence MASAEPLTALSRWY. A helical membrane pass occupies residues 15–35; that stretch reads LYAIHGYFCEVMFTAAWEFVV. The Extracellular portion of the chain corresponds to 36 to 40; sequence NLNWK. The chain crosses the membrane as a helical span at residues 41–61; sequence FPGVTSVWALFIYGTSILIVE. At 62–73 the chain is on the cytoplasmic side; it reads RMYLRLRGRCPL. The helical transmembrane segment at 74 to 94 threads the bilayer; the sequence is LLRCLIYTLWTYLWEFTTGFI. Over 95–109 the chain is Extracellular; that stretch reads LRQFNACPWDYSQFD. A helical membrane pass occupies residues 110–130; sequence FDFMGLITLEYAVPWFCGALI. Residues 131–167 lie on the Cytoplasmic side of the membrane; that stretch reads MEQFIIRNTLRLRFDKDAEPGEPSGALALANGHVKTD.

It belongs to the TMEM229 family.

The protein resides in the membrane. In Homo sapiens (Human), this protein is Transmembrane protein 229B (TMEM229B).